A 450-amino-acid chain; its full sequence is Phosphoglucosamine mutase (450 aa).

Ser102 acts as the Phosphoserine intermediate in catalysis. Residues Ser102, Asp243, Asp245, and Asp247 each contribute to the Mg(2+) site. Ser102 bears the Phosphoserine mark.

It belongs to the phosphohexose mutase family. It depends on Mg(2+) as a cofactor. Activated by phosphorylation.

The catalysed reaction is alpha-D-glucosamine 1-phosphate = D-glucosamine 6-phosphate. In terms of biological role, catalyzes the conversion of glucosamine-6-phosphate to glucosamine-1-phosphate. The polypeptide is Phosphoglucosamine mutase (Mesorhizobium japonicum (strain LMG 29417 / CECT 9101 / MAFF 303099) (Mesorhizobium loti (strain MAFF 303099))).